Consider the following 365-residue polypeptide: Ribosomal RNA large subunit methyltransferase F (365 aa).

2 stretches are compositionally biased toward low complexity: residues 1-18 (MPKPAIKTAAKPATSPAG) and 30-42 (AKLKASTAKAASK). The disordered stretch occupies residues 1–50 (MPKPAIKTAAKPATSPAGKRAKPNTPQSVAKLKASTAKAASKPKAKLGEK).

It belongs to the methyltransferase superfamily. METTL16/RlmF family.

The protein localises to the cytoplasm. The catalysed reaction is adenosine(1618) in 23S rRNA + S-adenosyl-L-methionine = N(6)-methyladenosine(1618) in 23S rRNA + S-adenosyl-L-homocysteine + H(+). Specifically methylates the adenine in position 1618 of 23S rRNA. The polypeptide is Ribosomal RNA large subunit methyltransferase F (Shewanella oneidensis (strain ATCC 700550 / JCM 31522 / CIP 106686 / LMG 19005 / NCIMB 14063 / MR-1)).